The sequence spans 31 residues: Cycloviolacin-O23 (31 aa).

The cyclopeptide (Gly-Asn) cross-link spans 1–31 (GLPTCGETCFGGTCNTPGCTCDSSWPICTHN). 3 cysteine pairs are disulfide-bonded: cysteine 5/cysteine 19, cysteine 9/cysteine 21, and cysteine 14/cysteine 28.

This is a cyclic peptide. Expressed in leaves but not in petals, petioles, roots and runners (at protein level).

Probably participates in a plant defense mechanism. The protein is Cycloviolacin-O23 of Viola odorata (Sweet violet).